Here is a 538-residue protein sequence, read N- to C-terminus: indole-2-monooxygenase (538 aa).

Residues 22-42 traverse the membrane as a helical segment; it reads ALLLAIPFSLLLLPLLLRYLA. A heme-binding site is contributed by Cys-481.

The protein belongs to the cytochrome P450 family. It depends on heme as a cofactor.

The protein resides in the membrane. It catalyses the reaction indole + reduced [NADPH--hemoprotein reductase] + O2 = indolin-2-one + oxidized [NADPH--hemoprotein reductase] + H2O + H(+). It participates in secondary metabolite biosynthesis; 2,4-dihydroxy-1,4-benzoxazin-3-one biosynthesis; 2,4-dihydroxy-1,4-benzoxazin-3-one from indoleglycerol phosphate: step 2/5. Its function is as follows. Catalyzes the conversion of indole to indolin-2-one. This Zea mays (Maize) protein is indole-2-monooxygenase (CYP71C4).